The primary structure comprises 260 residues: Putative ABC transporter ATP-binding protein PH0132 (260 aa).

The region spanning 2 to 234 (IEFRDVWFWY…DLEGFGLKEP (233 aa)) is the ABC transporter domain. 34-41 (GPNGSGKT) is a binding site for ATP.

It belongs to the ABC transporter superfamily.

It localises to the cell membrane. Functionally, probably part of an ABC transporter complex. Responsible for energy coupling to the transport system. The polypeptide is Putative ABC transporter ATP-binding protein PH0132 (Pyrococcus horikoshii (strain ATCC 700860 / DSM 12428 / JCM 9974 / NBRC 100139 / OT-3)).